We begin with the raw amino-acid sequence, 942 residues long: MSRNASNAYLKNGNSTPSNDKRSPSSLSQRSKTSTRSSKPFLQRLFPSTWFKNESSSRHPLTSIKENDTQTIGRRPSMRVKLFGKDKSKASMSTNDLPSHPRSQSVMGFSSSTSQLTGTSNSSRTRLNKDMRRDFGMTSMSSITSSTPTPSQLPVRPSTSLSFFDDIPLGPSFSAETILSSLSISTSNNAMSKTTPAPPLVTTKSISADQDDFYTCKEEVSTYEGLNSQIELSPVKSRDSQNKSAKNLSTAYRTVSGESRNLMVDPKVSPYGNSRTPLRDSSNYLRDRRSINRQSSLSIPKSTSETTRKTLALSNGGIDQSRVSSDSFKVDDSSAKMAAIDIWEGSQHIVSNDKALSWLVTDKPYNKAVLKHYISLYDFENTDILQSLRMICGNLYVHGETQELDHFLGEFSNQWCRTNPKGLFCNPQIVHSIAFSLLLLNTDLHIAELSASERMSRNQFVENTYRSIKQALNDSFDGNEEKKNAFFLSSYKSFASNESCNSPAIHSLHGNLSPGKSAELKKLHKRSLSSKVLEEAFSSYWMSALKEMYHSIKVSMILQPDRYLDMNFDFNDTNKINNPSSTANQTRHFHSVSEIKKLPMGTDELEKSMVRPSTAMYINRQNENAVSIDKSRDLQGTVNTKEIRSRSALSYQNDRPLATDLPSVIYNHKHPNVVSPFYVHPYIKQGILKFQSKESHKFRKKEVWSTVLAVLQRDVFTLYNLNTPNLSYDPKDLDISKVGKPVIKTTIIASLAKPFPSSEDAVVLKSTNSLYFDLETSSQLKLRFAGPSPKDAQGWIDALNYWAARSSKVPLLGGVTNVDYGWARCTGQRAQKSNAQLLKTKTDKIIVHKWQPQPVNTIPSSLSLGEQLSAFNNFMKLLKKTNDEHQNLHKEMLVVLSSQPKSTFRRAVENWKYKSDYLQLNLVRLRVYISVLEKYKSQAQNS.

Residues 1 to 18 (MSRNASNAYLKNGNSTPS) show a composition bias toward polar residues. Disordered regions lie at residues 1–128 (MSRN…TRLN) and 259–308 (SRNL…ETTR). A compositionally biased stretch (low complexity) spans 24 to 40 (PSSLSQRSKTSTRSSKP). Composition is skewed to polar residues over residues 50-60 (WFKNESSSRHP), 90-125 (ASMS…SSRT), 271-284 (YGNS…SSNY), and 292-305 (NRQS…STSE). Residues 295 to 497 (SSLSIPKSTS…LSSYKSFASN (203 aa)) form the SEC7 domain. In terms of domain architecture, PH spans 681-804 (PYIKQGILKF…WIDALNYWAA (124 aa)).

The polypeptide is PH and SEC7 domain-containing protein C11E3.11c (Schizosaccharomyces pombe (strain 972 / ATCC 24843) (Fission yeast)).